A 65-amino-acid polypeptide reads, in one-letter code: Large ribosomal subunit protein bL35 (65 aa).

The segment covering 1–15 has biased composition (basic residues); it reads MPKMKTKKSAAKRFQ. Positions 1 to 26 are disordered; it reads MPKMKTKKSAAKRFQVRGSGSIKRGQ.

It belongs to the bacterial ribosomal protein bL35 family.

The protein is Large ribosomal subunit protein bL35 of Bordetella avium (strain 197N).